The sequence spans 297 residues: 4-hydroxy-tetrahydrodipicolinate synthase (297 aa).

Threonine 49 provides a ligand contact to pyruvate. Catalysis depends on tyrosine 137, which acts as the Proton donor/acceptor. Lysine 165 functions as the Schiff-base intermediate with substrate in the catalytic mechanism. A pyruvate-binding site is contributed by isoleucine 208.

The protein belongs to the DapA family. Homotetramer; dimer of dimers.

Its subcellular location is the cytoplasm. The catalysed reaction is L-aspartate 4-semialdehyde + pyruvate = (2S,4S)-4-hydroxy-2,3,4,5-tetrahydrodipicolinate + H2O + H(+). It participates in amino-acid biosynthesis; L-lysine biosynthesis via DAP pathway; (S)-tetrahydrodipicolinate from L-aspartate: step 3/4. Functionally, catalyzes the condensation of (S)-aspartate-beta-semialdehyde [(S)-ASA] and pyruvate to 4-hydroxy-tetrahydrodipicolinate (HTPA). The sequence is that of 4-hydroxy-tetrahydrodipicolinate synthase from Gluconacetobacter diazotrophicus (strain ATCC 49037 / DSM 5601 / CCUG 37298 / CIP 103539 / LMG 7603 / PAl5).